A 336-amino-acid chain; its full sequence is D-erythrose-4-phosphate dehydrogenase (336 aa).

An NAD(+)-binding site is contributed by 11–12 (RI). Residues 153 to 155 (SCT), Arg199, 212 to 213 (TK), and Arg235 each bind substrate. Cys154 functions as the Nucleophile in the catalytic mechanism. NAD(+) is bound at residue Asn317.

It belongs to the glyceraldehyde-3-phosphate dehydrogenase family. Epd subfamily. Homotetramer.

The protein resides in the cytoplasm. It catalyses the reaction D-erythrose 4-phosphate + NAD(+) + H2O = 4-phospho-D-erythronate + NADH + 2 H(+). Its pathway is cofactor biosynthesis; pyridoxine 5'-phosphate biosynthesis; pyridoxine 5'-phosphate from D-erythrose 4-phosphate: step 1/5. Its function is as follows. Catalyzes the NAD-dependent conversion of D-erythrose 4-phosphate to 4-phosphoerythronate. The sequence is that of D-erythrose-4-phosphate dehydrogenase from Aeromonas salmonicida (strain A449).